The chain runs to 282 residues: Putative SLC9B1-like protein SLC9B1P1 (282 aa).

Helical transmembrane passes span 27-47, 51-71, 87-107, 135-155, 174-194, 198-218, and 239-259; these read LLAITGFNTCLSIVFYSGGMI, IASLRNVCISLLAGIVLGFFV, GFLVLITFVSAVLGSQPIGLH, IITNVWDIFQPLLFGLVGAEV, LALCVRILNIYLLMCFAGFSF, IFIALAWMPKATVQAVLGPLA, and VAFLAIMITAPNGALLMGILG.

Belongs to the monovalent cation:proton antiporter 1 (CPA1) transporter (TC 2.A.36) family.

It is found in the membrane. This Homo sapiens (Human) protein is Putative SLC9B1-like protein SLC9B1P1 (SLC9B1P1).